The primary structure comprises 256 residues: 3-dehydroquinate dehydratase (256 aa).

3-dehydroquinate-binding positions include serine 19, 38-40, and arginine 68; that span reads EIR. The active-site Proton donor/acceptor is histidine 122. The active-site Schiff-base intermediate with substrate is the lysine 147. 3 residues coordinate 3-dehydroquinate: arginine 185, threonine 204, and glutamine 208.

It belongs to the type-I 3-dehydroquinase family. Homodimer.

It carries out the reaction 3-dehydroquinate = 3-dehydroshikimate + H2O. Its pathway is metabolic intermediate biosynthesis; chorismate biosynthesis; chorismate from D-erythrose 4-phosphate and phosphoenolpyruvate: step 3/7. Involved in the third step of the chorismate pathway, which leads to the biosynthesis of aromatic amino acids. Catalyzes the cis-dehydration of 3-dehydroquinate (DHQ) and introduces the first double bond of the aromatic ring to yield 3-dehydroshikimate. This is 3-dehydroquinate dehydratase from Methanospirillum hungatei JF-1 (strain ATCC 27890 / DSM 864 / NBRC 100397 / JF-1).